The following is a 365-amino-acid chain: Probable 7-methylxanthine methyltransferase PCS2 (365 aa).

Tyr-19 is a binding site for S-adenosyl-L-homocysteine. Thr-26 provides a ligand contact to theobromine. Residues Cys-62, Asp-99, Leu-100, Ser-134, and Phe-135 each coordinate S-adenosyl-L-homocysteine. Residues Tyr-152, His-155, and Trp-156 each contribute to the theobromine site. Mg(2+) is bound at residue Asn-173. Residue Arg-221 coordinates theobromine. Residues Asp-259, Phe-261, and Asn-262 each contribute to the Mg(2+) site.

It belongs to the methyltransferase superfamily. Type-7 methyltransferase family. It depends on Mg(2+) as a cofactor.

The enzyme catalyses 7-methylxanthine + S-adenosyl-L-methionine = theobromine + S-adenosyl-L-homocysteine + H(+). In terms of biological role, no detectable N-methyltransferase activity. This Camellia ptilophylla (Cocoa tea) protein is Probable 7-methylxanthine methyltransferase PCS2.